Here is a 244-residue protein sequence, read N- to C-terminus: Cell division protein DivIB (244 aa).

The Cytoplasmic segment spans residues 1-6; that stretch reads MKIKWP. A helical transmembrane segment spans residues 7–27; that stretch reads LQLWISLAVFVTIAVGTLLLL. The POTRA domain occupies 28–104; sequence QPWQTIKTVT…IDIAEKVTAG (77 aa). Residues 28–244 are Extracellular-facing; sequence QPWQTIKTVT…KADNKAHQKQ (217 aa).

Belongs to the FtsQ/DivIB family. DivIB subfamily.

Its subcellular location is the cell membrane. In terms of biological role, cell division protein that may be involved in stabilizing or promoting the assembly of the division complex. The polypeptide is Cell division protein DivIB (Leuconostoc kimchii (strain IMSNU 11154 / KCTC 2386 / IH25)).